A 263-amino-acid polypeptide reads, in one-letter code: LOB domain-containing protein 41 (263 aa).

In terms of domain architecture, LOB spans 3–109 (MSCNGCRVLR…VEAVMKGEPV (107 aa)). The tract at residues 162–204 (TVAIQAESEGKSDEASHDSSLSHQSEIVAAHEGESKESESNVS) is disordered. Basic and acidic residues-rich tracts occupy residues 169-178 (SEGKSDEASH) and 190-200 (AAHEGESKESE).

This sequence belongs to the LOB domain-containing protein family. Expressed in young shoots, roots, stems, leaves and flowers.

This is LOB domain-containing protein 41 (LBD41) from Arabidopsis thaliana (Mouse-ear cress).